Reading from the N-terminus, the 203-residue chain is Putative B3 domain-containing protein At1g50220 (203 aa).

The segment at residues 99–195 (DIVGNVALPK…KFIVLNFQHK (97 aa)) is a DNA-binding region (TF-B3).

Its subcellular location is the nucleus. The sequence is that of Putative B3 domain-containing protein At1g50220 from Arabidopsis thaliana (Mouse-ear cress).